Consider the following 182-residue polypeptide: Oligoribonuclease (182 aa).

One can recognise an Exonuclease domain in the interval 8–171 (LLWLDMEMTG…ADIYESIDEL (164 aa)). Tyrosine 129 is an active-site residue.

Belongs to the oligoribonuclease family.

The protein localises to the cytoplasm. 3'-to-5' exoribonuclease specific for small oligoribonucleotides. The protein is Oligoribonuclease of Thiobacillus denitrificans (strain ATCC 25259 / T1).